The sequence spans 440 residues: MAEKSYYIITHGCQMNVHDSETIAGILESMGFVPSPEEKTADLIIINTCSVRETAENKVFTKIGELKKLKRENPDLVIGVGGCIPQQEKVAKRLLERFPHLDFIFGTHNLPELPKILERVFEKHERVLEVWQSEGQIVEGIPVKREPGVRAWVTIMYGCNNFCTYCIVPYVRGRERSRKKEDILQEIRQLVAEGYREVTLLGQNVNSYGKDLKGKPMFAELLADIEKIDGLWRVRFTTSHPRDLTDDVIEVMASSRKICEHLHLPVQAGSNKILKAMHRGYTREYYLNLVEKIRAKIPKVSFTTDIIVGFPGETEEDFEQTLDLVRKVRYDSAFTFVYNKRTGTPAAEMKDQVPEEVKSRRIQELIELQNGISLELNKNEEGNIHEILVEGKSKTDETKLAGRTRTNKLVVFNGNEDLVGKLVKVKITEGKLFHLEGVLV.

An MTTase N-terminal domain is found at 4–122; it reads KSYYIITHGC…LPKILERVFE (119 aa). Residues C13, C49, C83, C159, C163, and C166 each contribute to the [4Fe-4S] cluster site. Positions 145 to 375 constitute a Radical SAM core domain; sequence REPGVRAWVT…IELQNGISLE (231 aa). Residues 378–440 form the TRAM domain; the sequence is KNEEGNIHEI…KLFHLEGVLV (63 aa).

The protein belongs to the methylthiotransferase family. MiaB subfamily. As to quaternary structure, monomer. [4Fe-4S] cluster serves as cofactor.

Its subcellular location is the cytoplasm. The enzyme catalyses N(6)-dimethylallyladenosine(37) in tRNA + (sulfur carrier)-SH + AH2 + 2 S-adenosyl-L-methionine = 2-methylsulfanyl-N(6)-dimethylallyladenosine(37) in tRNA + (sulfur carrier)-H + 5'-deoxyadenosine + L-methionine + A + S-adenosyl-L-homocysteine + 2 H(+). Catalyzes the methylthiolation of N6-(dimethylallyl)adenosine (i(6)A), leading to the formation of 2-methylthio-N6-(dimethylallyl)adenosine (ms(2)i(6)A) at position 37 in tRNAs that read codons beginning with uridine. The protein is tRNA-2-methylthio-N(6)-dimethylallyladenosine synthase of Carboxydothermus hydrogenoformans (strain ATCC BAA-161 / DSM 6008 / Z-2901).